The following is a 103-amino-acid chain: Large ribosomal subunit protein uL24 (103 aa).

Belongs to the universal ribosomal protein uL24 family. In terms of assembly, part of the 50S ribosomal subunit.

Functionally, one of two assembly initiator proteins, it binds directly to the 5'-end of the 23S rRNA, where it nucleates assembly of the 50S subunit. Its function is as follows. One of the proteins that surrounds the polypeptide exit tunnel on the outside of the subunit. In Histophilus somni (strain 129Pt) (Haemophilus somnus), this protein is Large ribosomal subunit protein uL24.